A 155-amino-acid chain; its full sequence is 2-C-methyl-D-erythritol 2,4-cyclodiphosphate synthase (155 aa).

Positions 8 and 10 each coordinate a divalent metal cation. 4-CDP-2-C-methyl-D-erythritol 2-phosphate-binding positions include 8–10 (DVH) and 34–35 (HS). Histidine 42 provides a ligand contact to a divalent metal cation. 4-CDP-2-C-methyl-D-erythritol 2-phosphate-binding positions include 56-58 (DIG), 61-65 (FPDSD), 100-106 (AQKPKML), 132-135 (TTEE), phenylalanine 139, and lysine 142.

Belongs to the IspF family. Homotrimer. It depends on a divalent metal cation as a cofactor.

The catalysed reaction is 4-CDP-2-C-methyl-D-erythritol 2-phosphate = 2-C-methyl-D-erythritol 2,4-cyclic diphosphate + CMP. It functions in the pathway isoprenoid biosynthesis; isopentenyl diphosphate biosynthesis via DXP pathway; isopentenyl diphosphate from 1-deoxy-D-xylulose 5-phosphate: step 4/6. Its function is as follows. Involved in the biosynthesis of isopentenyl diphosphate (IPP) and dimethylallyl diphosphate (DMAPP), two major building blocks of isoprenoid compounds. Catalyzes the conversion of 4-diphosphocytidyl-2-C-methyl-D-erythritol 2-phosphate (CDP-ME2P) to 2-C-methyl-D-erythritol 2,4-cyclodiphosphate (ME-CPP) with a corresponding release of cytidine 5-monophosphate (CMP). This is 2-C-methyl-D-erythritol 2,4-cyclodiphosphate synthase from Clostridium botulinum (strain Okra / Type B1).